A 189-amino-acid chain; its full sequence is Adenylate kinase (189 aa).

Residue Gly12–Thr17 participates in ATP binding. Positions Ser33 to Val62 are NMP. AMP is bound by residues Thr34, Arg39, Asn60 to Val62, Gly87 to Arg90, and Gln94. An LID region spans residues Gly129–Asp135. Residue Arg130 coordinates ATP. Positions 132 and 144 each coordinate AMP. Residue Arg172 participates in ATP binding.

The protein belongs to the adenylate kinase family. In terms of assembly, monomer.

The protein resides in the cytoplasm. The enzyme catalyses AMP + ATP = 2 ADP. The protein operates within purine metabolism; AMP biosynthesis via salvage pathway; AMP from ADP: step 1/1. In terms of biological role, catalyzes the reversible transfer of the terminal phosphate group between ATP and AMP. Plays an important role in cellular energy homeostasis and in adenine nucleotide metabolism. The sequence is that of Adenylate kinase from Campylobacter concisus (strain 13826).